A 297-amino-acid polypeptide reads, in one-letter code: tRNA (guanine-N(7)-)-methyltransferase (297 aa).

S-adenosyl-L-methionine is bound by residues Gly101, 124–125 (EI), 171–172 (NT), and Cys191. Asp194 is a catalytic residue. 270-272 (TEE) is a binding site for S-adenosyl-L-methionine.

The protein belongs to the class I-like SAM-binding methyltransferase superfamily. TrmB family. In terms of assembly, forms a complex with trm82.

The protein localises to the nucleus. It catalyses the reaction guanosine(46) in tRNA + S-adenosyl-L-methionine = N(7)-methylguanosine(46) in tRNA + S-adenosyl-L-homocysteine. Its pathway is tRNA modification; N(7)-methylguanine-tRNA biosynthesis. Functionally, catalyzes the formation of N(7)-methylguanine at position 46 (m7G46) in tRNA. This chain is tRNA (guanine-N(7)-)-methyltransferase (trm8), found in Aspergillus niger (strain ATCC MYA-4892 / CBS 513.88 / FGSC A1513).